A 121-amino-acid polypeptide reads, in one-letter code: Replication protein A 14 kDa subunit (121 aa).

Val-2 is subject to N-acetylvaline. Residues Lys-23, Lys-39, and Lys-88 each participate in a glycyl lysine isopeptide (Lys-Gly) (interchain with G-Cter in ubiquitin) cross-link.

This sequence belongs to the replication factor A protein 3 family. Component of the canonical replication protein A complex (RPA), a heterotrimer composed of RPA1, RPA2 and RPA3. Also a component of the aRPA, the alternative replication protein A complex, a trimeric complex similar to the replication protein A complex/RPA but where RPA1 and RPA3 are associated with RPA4 instead of RPA2. Interacts with BRIP1/FANCJ via the RPA1 subunit; following DNA damage they colocalize in foci in the nucleus. Post-translationally, ubiquitinated by RFWD3 at stalled replication forks in response to DNA damage: ubiquitination by RFWD3 does not lead to degradation by the proteasome and promotes removal of the RPA complex from stalled replication forks, promoting homologous recombination.

It is found in the nucleus. Its function is as follows. As part of the heterotrimeric replication protein A complex (RPA/RP-A), binds and stabilizes single-stranded DNA intermediates that form during DNA replication or upon DNA stress. It prevents their reannealing and in parallel, recruits and activates different proteins and complexes involved in DNA metabolism. Thereby, it plays an essential role both in DNA replication and the cellular response to DNA damage. In the cellular response to DNA damage, the RPA complex controls DNA repair and DNA damage checkpoint activation. Through recruitment of ATRIP activates the ATR kinase a master regulator of the DNA damage response. It is required for the recruitment of the DNA double-strand break repair factors RAD51 and RAD52 to chromatin, in response to DNA damage. Also recruits to sites of DNA damage proteins like XPA and XPG that are involved in nucleotide excision repair and is required for this mechanism of DNA repair. Also plays a role in base excision repair (BER), probably through interaction with UNG. RPA stimulates 5'-3' helicase activity of BRIP1/FANCJ. Also recruits SMARCAL1/HARP, which is involved in replication fork restart, to sites of DNA damage. May also play a role in telomere maintenance. RPA3 has its own single-stranded DNA-binding activity and may be responsible for polarity of the binding of the complex to DNA. As part of the alternative replication protein A complex, aRPA, binds single-stranded DNA and probably plays a role in DNA repair. Compared to the RPA2-containing, canonical RPA complex, may not support chromosomal DNA replication and cell cycle progression through S-phase. The aRPA may not promote efficient priming by DNA polymerase alpha but could support DNA synthesis by polymerase delta in presence of PCNA and replication factor C (RFC), the dual incision/excision reaction of nucleotide excision repair and RAD51-dependent strand exchange. This chain is Replication protein A 14 kDa subunit (RPA3), found in Homo sapiens (Human).